Here is a 122-residue protein sequence, read N- to C-terminus: Serum amyloid A-1 protein (122 aa).

The signal sequence occupies residues 1–19 (MKLLTSLVFCSLLLGVCHG). Residues 20–45 (GFFSFVHEAFQGAGDMWRAYTDMKEA) form an important for amyloid formation region. Residues 91-108 (HEDTIADQEANRHGRSGK) are compositionally biased toward basic and acidic residues. Residues 91–122 (HEDTIADQEANRHGRSGKDPNYYRPPGLPDKY) are disordered.

The protein belongs to the SAA family. In terms of assembly, homohexamer; dimer of trimers. Can form amyloid fibrils after partial proteolysis; the native, undenatured protein does not form amyloid fibrils (in vitro). Apolipoprotein of the HDL complex. Binds to heparin. As to expression, detected in blood plasma (at protein level). Detected in liver.

The protein resides in the secreted. Major acute phase protein. The chain is Serum amyloid A-1 protein (Saa1) from Mus musculus (Mouse).